Consider the following 190-residue polypeptide: Putative glutathione-dependent formaldehyde-activating enzyme (190 aa).

The region spanning 19 to 165 (FKGGKLYCHC…FRKEGLQTYD (147 aa)) is the CENP-V/GFA domain. 7 residues coordinate Zn(2+): Cys26, Cys28, Cys47, Cys49, Cys52, Cys94, and Cys97.

Belongs to the Gfa family. Requires Zn(2+) as cofactor.

It catalyses the reaction S-(hydroxymethyl)glutathione = glutathione + formaldehyde. It participates in one-carbon metabolism; formaldehyde degradation; formate from formaldehyde (glutathione route): step 1/3. In terms of biological role, catalyzes the condensation of formaldehyde and glutathione to S-hydroxymethylglutathione. The protein is Putative glutathione-dependent formaldehyde-activating enzyme of Phaeosphaeria nodorum (strain SN15 / ATCC MYA-4574 / FGSC 10173) (Glume blotch fungus).